The primary structure comprises 227 residues: uncharacterized protein (227 aa).

17-24 (GKTGCGKT) lines the ATP pocket.

This is an uncharacterized protein from Methanocaldococcus jannaschii (strain ATCC 43067 / DSM 2661 / JAL-1 / JCM 10045 / NBRC 100440) (Methanococcus jannaschii).